Reading from the N-terminus, the 392-residue chain is uncharacterized protein (392 aa).

This is an uncharacterized protein from Encephalitozoon cuniculi (strain GB-M1) (Microsporidian parasite).